A 405-amino-acid chain; its full sequence is Elongation factor Tu (405 aa).

Residues 10-215 (KPHVNIGTIG…AVDSYIPTPE (206 aa)) form the tr-type G domain. Positions 19–26 (GHVDHGKT) are G1. 19–26 (GHVDHGKT) is a binding site for GTP. Thr26 contacts Mg(2+). The G2 stretch occupies residues 61 to 65 (GITIN). Positions 82-85 (DCPG) are G3. GTP-binding positions include 82–86 (DCPGH) and 137–140 (NKVD). Residues 137-140 (NKVD) form a G4 region. A G5 region spans residues 175-177 (SAL).

Belongs to the TRAFAC class translation factor GTPase superfamily. Classic translation factor GTPase family. EF-Tu/EF-1A subfamily. Monomer.

The protein localises to the cytoplasm. It carries out the reaction GTP + H2O = GDP + phosphate + H(+). In terms of biological role, GTP hydrolase that promotes the GTP-dependent binding of aminoacyl-tRNA to the A-site of ribosomes during protein biosynthesis. The polypeptide is Elongation factor Tu (Deinococcus radiodurans (strain ATCC 13939 / DSM 20539 / JCM 16871 / CCUG 27074 / LMG 4051 / NBRC 15346 / NCIMB 9279 / VKM B-1422 / R1)).